Reading from the N-terminus, the 369-residue chain is S-adenosyl-L-methionine-dependent uroporphyrinogen III methyltransferase, chloroplastic (369 aa).

The N-terminal 28 residues, 1–28 (MALVQRIPISSSSIRNWQQARTNLTPIC), are a transit peptide targeting the chloroplast. S-adenosyl-L-homocysteine contacts are provided by residues proline 124, 200–202 (GGD), 230–231 (TA), methionine 284, and threonine 341.

Belongs to the precorrin methyltransferase family. In terms of tissue distribution, mostly expressed in leaves, and, to a lower extent, in stems, flowers and siliques.

Its subcellular location is the plastid. The protein resides in the chloroplast. It carries out the reaction uroporphyrinogen III + 2 S-adenosyl-L-methionine = precorrin-2 + 2 S-adenosyl-L-homocysteine + H(+). Its pathway is porphyrin-containing compound metabolism; siroheme biosynthesis; precorrin-2 from uroporphyrinogen III: step 1/1. Its function is as follows. Essential protein required for siroheme biosynthesis. Catalyzes the two successive C-2 and C-7 methylation reactions involved in the conversion of uroporphyrinogen III to precorrin-2 via the intermediate formation of precorrin-1. It is a step in the biosynthesis of siroheme. Promotes nitrogen and sulfur assimilation as well as photosynthesis efficiency by triggering chlorophyll, nitrite reductase (NiR) and sulfite reductase (SiR) biosynthesis. This chain is S-adenosyl-L-methionine-dependent uroporphyrinogen III methyltransferase, chloroplastic, found in Arabidopsis thaliana (Mouse-ear cress).